The primary structure comprises 341 residues: L-threonine 3-dehydrogenase (341 aa).

Cys38 is a Zn(2+) binding site. Catalysis depends on charge relay system residues Thr40 and His43. Zn(2+)-binding residues include His63, Glu64, Cys93, Cys96, Cys99, and Cys107. NAD(+)-binding positions include Ile175, Asp195, Arg200, 262 to 264 (LGI), and 286 to 287 (IY).

It belongs to the zinc-containing alcohol dehydrogenase family. In terms of assembly, homotetramer. Requires Zn(2+) as cofactor.

Its subcellular location is the cytoplasm. The enzyme catalyses L-threonine + NAD(+) = (2S)-2-amino-3-oxobutanoate + NADH + H(+). Its pathway is amino-acid degradation; L-threonine degradation via oxydo-reductase pathway; glycine from L-threonine: step 1/2. Functionally, catalyzes the NAD(+)-dependent oxidation of L-threonine to 2-amino-3-ketobutyrate. This chain is L-threonine 3-dehydrogenase, found in Shewanella putrefaciens (strain CN-32 / ATCC BAA-453).